A 124-amino-acid chain; its full sequence is Small ribosomal subunit protein uS12 (124 aa).

Aspartate 89 bears the 3-methylthioaspartic acid mark.

The protein belongs to the universal ribosomal protein uS12 family. Part of the 30S ribosomal subunit. Contacts proteins S8 and S17. May interact with IF1 in the 30S initiation complex.

Its function is as follows. With S4 and S5 plays an important role in translational accuracy. In terms of biological role, interacts with and stabilizes bases of the 16S rRNA that are involved in tRNA selection in the A site and with the mRNA backbone. Located at the interface of the 30S and 50S subunits, it traverses the body of the 30S subunit contacting proteins on the other side and probably holding the rRNA structure together. The combined cluster of proteins S8, S12 and S17 appears to hold together the shoulder and platform of the 30S subunit. The polypeptide is Small ribosomal subunit protein uS12 (Vibrio atlanticus (strain LGP32) (Vibrio splendidus (strain Mel32))).